The sequence spans 57 residues: Lantibiotic nisin-Z (57 aa).

Positions 1–23 are excised as a propeptide; the sequence is MSTKDFNLDLVSVSKKDSGASPR. T25 is subject to 2,3-didehydrobutyrine. Residues 26–30 constitute a cross-link (lanthionine (Ser-Cys)); sequence SISLC. S28 bears the 2,3-didehydroalanine (Ser) mark. 4 consecutive cross-links (beta-methyllanthionine (Thr-Cys)) follow at residues 31–34, 36–42, 46–49, and 48–51; these read TPGC, TGALMGC, TATC, and TCNC. The residue at position 56 (S56) is a 2,3-didehydroalanine (Ser).

This sequence belongs to the type A lantibiotic family. Maturation of lantibiotics involves the enzymatic conversion of Thr, and Ser into dehydrated AA and the formation of thioether bonds with cysteine. This is followed by membrane translocation and cleavage of the modified precursor. Post-translationally, the structure of the 2,3-didehydrobutyrine is not discussed in PubMed:15361862. It is probably the Z-isomer by similarity.

Its function is as follows. Lanthionine-containing peptide antibiotic (lantibiotic) active on Gram-positive bacteria. The bactericidal activity of lantibiotics is based on depolarization of energized bacterial cytoplasmic membranes, initiated by the formation of aqueous transmembrane pores. This chain is Lantibiotic nisin-Z (nisZ), found in Lactococcus lactis subsp. lactis (Streptococcus lactis).